The following is a 457-amino-acid chain: Multidrug resistance protein MdtK (457 aa).

Helical transmembrane passes span 11-31 (LLAL…MGVV), 46-66 (AVAV…GLLL), 93-113 (WLAL…DHVI), 127-147 (AVGF…FQVL), 160-180 (GMVI…IFIY), 188-208 (LGGV…FLMM), 243-263 (LPVA…ALLV), 283-301 (LMFM…RVGF), 316-336 (YTSM…TIVF), 357-377 (LMLL…GSGV), 387-407 (IFFI…YLLG), and 418-438 (PAGF…LMVL).

Belongs to the multi antimicrobial extrusion (MATE) (TC 2.A.66.1) family. MdtK subfamily.

It is found in the cell inner membrane. Its function is as follows. Multidrug efflux pump that functions probably as a Na(+)/drug antiporter. In Yersinia pseudotuberculosis serotype IB (strain PB1/+), this protein is Multidrug resistance protein MdtK.